The primary structure comprises 60 residues: UPF0434 protein SG0997 (60 aa).

Belongs to the UPF0434 family.

The protein is UPF0434 protein SG0997 of Sodalis glossinidius (strain morsitans).